We begin with the raw amino-acid sequence, 99 residues long: Cell division protein FtsB (99 aa).

The Cytoplasmic portion of the chain corresponds to 1–3 (MKF). A helical transmembrane segment spans residues 4 to 21 (FVIALIVLLGLLQYRLWS). Residues 22–99 (GSNSLPEYFV…GERSVSSPSQ (78 aa)) lie on the Periplasmic side of the membrane. Positions 36–73 (IAVQQEGNDKLNERNQVLKEEIIDLKSGTEAIEERARN) form a coiled coil.

The protein belongs to the FtsB family. In terms of assembly, part of a complex composed of FtsB, FtsL and FtsQ.

It is found in the cell inner membrane. In terms of biological role, essential cell division protein. May link together the upstream cell division proteins, which are predominantly cytoplasmic, with the downstream cell division proteins, which are predominantly periplasmic. The protein is Cell division protein FtsB of Shewanella sp. (strain W3-18-1).